We begin with the raw amino-acid sequence, 334 residues long: Ornithine carbamoyltransferase (334 aa).

Carbamoyl phosphate is bound by residues 57-60 (STRT), Gln-84, Arg-108, and 135-138 (HPTQ). L-ornithine-binding positions include Asn-169, Asp-233, and 237-238 (SM). Residues 275-276 (CL) and Arg-320 each bind carbamoyl phosphate.

It belongs to the aspartate/ornithine carbamoyltransferase superfamily. OTCase family.

It localises to the cytoplasm. The catalysed reaction is carbamoyl phosphate + L-ornithine = L-citrulline + phosphate + H(+). It functions in the pathway amino-acid biosynthesis; L-arginine biosynthesis; L-arginine from L-ornithine and carbamoyl phosphate: step 1/3. Reversibly catalyzes the transfer of the carbamoyl group from carbamoyl phosphate (CP) to the N(epsilon) atom of ornithine (ORN) to produce L-citrulline. In Vibrio cholerae serotype O1 (strain ATCC 39315 / El Tor Inaba N16961), this protein is Ornithine carbamoyltransferase.